The primary structure comprises 396 residues: NADH-quinone oxidoreductase subunit D (396 aa).

Belongs to the complex I 49 kDa subunit family. In terms of assembly, NDH-1 is composed of 14 different subunits. Subunits NuoB, C, D, E, F, and G constitute the peripheral sector of the complex.

The protein localises to the cell inner membrane. It carries out the reaction a quinone + NADH + 5 H(+)(in) = a quinol + NAD(+) + 4 H(+)(out). NDH-1 shuttles electrons from NADH, via FMN and iron-sulfur (Fe-S) centers, to quinones in the respiratory chain. The immediate electron acceptor for the enzyme in this species is believed to be ubiquinone. Couples the redox reaction to proton translocation (for every two electrons transferred, four hydrogen ions are translocated across the cytoplasmic membrane), and thus conserves the redox energy in a proton gradient. This chain is NADH-quinone oxidoreductase subunit D, found in Methylorubrum extorquens (strain PA1) (Methylobacterium extorquens).